A 338-amino-acid chain; its full sequence is Ketol-acid reductoisomerase (NADP(+)) (338 aa).

The KARI N-terminal Rossmann domain maps to 1-181 (MKVYYDKDAD…GGGKAGIIET (181 aa)). NADP(+) is bound by residues 24-27 (YGSQ), Arg47, and Ser52. His107 is a catalytic residue. NADP(+) is bound at residue Gly133. Positions 182–327 (NFREETETDL…EKLRAMMPWI (146 aa)) constitute a KARI C-terminal knotted domain. Positions 190, 194, 226, and 230 each coordinate Mg(2+). Position 251 (Ser251) interacts with substrate.

It belongs to the ketol-acid reductoisomerase family. Mg(2+) serves as cofactor.

The enzyme catalyses (2R)-2,3-dihydroxy-3-methylbutanoate + NADP(+) = (2S)-2-acetolactate + NADPH + H(+). It carries out the reaction (2R,3R)-2,3-dihydroxy-3-methylpentanoate + NADP(+) = (S)-2-ethyl-2-hydroxy-3-oxobutanoate + NADPH + H(+). The protein operates within amino-acid biosynthesis; L-isoleucine biosynthesis; L-isoleucine from 2-oxobutanoate: step 2/4. Its pathway is amino-acid biosynthesis; L-valine biosynthesis; L-valine from pyruvate: step 2/4. Involved in the biosynthesis of branched-chain amino acids (BCAA). Catalyzes an alkyl-migration followed by a ketol-acid reduction of (S)-2-acetolactate (S2AL) to yield (R)-2,3-dihydroxy-isovalerate. In the isomerase reaction, S2AL is rearranged via a Mg-dependent methyl migration to produce 3-hydroxy-3-methyl-2-ketobutyrate (HMKB). In the reductase reaction, this 2-ketoacid undergoes a metal-dependent reduction by NADPH to yield (R)-2,3-dihydroxy-isovalerate. The protein is Ketol-acid reductoisomerase (NADP(+)) of Methylibium petroleiphilum (strain ATCC BAA-1232 / LMG 22953 / PM1).